We begin with the raw amino-acid sequence, 227 residues long: MRLTPTERDRLLLFGAAELARARRARGLRLNVPEATALIADTVCEAARDGARLAQAIERARSVLGPDDVLPGVADVVTEVHVEAVFDDGSRLAVVADPVGGGGLGDDAPGALLPGHDRPEPEAALRLPVTNTATVPVSVTSHFHFFEANPRLDFDRGRAYGMRLAVPAGSSVRFGPGERVEVGLVPIGGARVAIGFAGLVDGPLDAPGAREEALRRAAACGYLGADR.

The segment at 1 to 101 is urease gamma; the sequence is MRLTPTERDR…LAVVADPVGG (101 aa). The interval 102–227 is urease beta; that stretch reads GGLGDDAPGA…AACGYLGADR (126 aa).

In the N-terminal section; belongs to the urease gamma subunit family. This sequence in the C-terminal section; belongs to the urease beta subunit family. In terms of assembly, heterohexamer of 3 UreC (alpha) and 3 UreAB (gamma/beta) subunits.

The protein resides in the cytoplasm. It catalyses the reaction urea + 2 H2O + H(+) = hydrogencarbonate + 2 NH4(+). Its pathway is nitrogen metabolism; urea degradation; CO(2) and NH(3) from urea (urease route): step 1/1. The protein is Urease subunit gamma/beta of Streptomyces coelicolor (strain ATCC BAA-471 / A3(2) / M145).